A 153-amino-acid chain; its full sequence is Large ribosomal subunit protein uL22 (153 aa).

The disordered stretch occupies residues alanine 128 to alanine 153. Positions alanine 137–alanine 147 are enriched in low complexity.

It belongs to the universal ribosomal protein uL22 family. As to quaternary structure, part of the 50S ribosomal subunit.

Functionally, this protein binds specifically to 23S rRNA; its binding is stimulated by other ribosomal proteins, e.g. L4, L17, and L20. It is important during the early stages of 50S assembly. It makes multiple contacts with different domains of the 23S rRNA in the assembled 50S subunit and ribosome. The globular domain of the protein is located near the polypeptide exit tunnel on the outside of the subunit, while an extended beta-hairpin is found that lines the wall of the exit tunnel in the center of the 70S ribosome. In Acidiphilium cryptum (strain JF-5), this protein is Large ribosomal subunit protein uL22.